We begin with the raw amino-acid sequence, 298 residues long: ATP synthase gamma chain (298 aa).

The protein belongs to the ATPase gamma chain family. F-type ATPases have 2 components, CF(1) - the catalytic core - and CF(0) - the membrane proton channel. CF(1) has five subunits: alpha(3), beta(3), gamma(1), delta(1), epsilon(1). CF(0) has three main subunits: a, b and c.

It is found in the cell inner membrane. Functionally, produces ATP from ADP in the presence of a proton gradient across the membrane. The gamma chain is believed to be important in regulating ATPase activity and the flow of protons through the CF(0) complex. This chain is ATP synthase gamma chain, found in Francisella tularensis subsp. holarctica (strain FTNF002-00 / FTA).